The primary structure comprises 463 residues: Glutathione amide reductase (463 aa).

Ni(2+)-binding residues include T2, Q3, and H4. Residues S14 to G15, E34, and T41 contribute to the FAD site. A disulfide bridge connects residues C42 and C47. FAD is bound by residues K50 and H113–A114. K50 is an NAD(+) binding site. NAD(+) contacts are provided by residues A174–E180, L197–E198, V230, and G261. FAD contacts are provided by residues D302 and Q308–T310. NAD(+) contacts are provided by Q308 and V341. FAD is bound at residue H437. H437 acts as the Proton acceptor in catalysis.

It belongs to the class-I pyridine nucleotide-disulfide oxidoreductase family. Homodimer. The cofactor is FAD.

The enzyme catalyses 2 glutathione amide + NAD(+) = glutathione amide disulfide + NADH + H(+). In terms of biological role, catalyzes the reduction of glutathione amide disulfide (GASSAG) to restore glutathione amide (GASH) in the presence of NADH. May play a role in GASH metabolism under anaerobic conditions as a sulfide carrier necessary for cytoplasmic sulfide oxidation. This Marichromatium gracile (Chromatium gracile) protein is Glutathione amide reductase.